The following is a 177-amino-acid chain: Large ribosomal subunit protein uL6 (177 aa).

It belongs to the universal ribosomal protein uL6 family. In terms of assembly, part of the 50S ribosomal subunit.

In terms of biological role, this protein binds to the 23S rRNA, and is important in its secondary structure. It is located near the subunit interface in the base of the L7/L12 stalk, and near the tRNA binding site of the peptidyltransferase center. This Bradyrhizobium diazoefficiens (strain JCM 10833 / BCRC 13528 / IAM 13628 / NBRC 14792 / USDA 110) protein is Large ribosomal subunit protein uL6.